A 122-amino-acid polypeptide reads, in one-letter code: Large ribosomal subunit protein uL14 (122 aa).

Belongs to the universal ribosomal protein uL14 family. As to quaternary structure, part of the 50S ribosomal subunit. Forms a cluster with proteins L3 and L19. In the 70S ribosome, L14 and L19 interact and together make contacts with the 16S rRNA in bridges B5 and B8.

In terms of biological role, binds to 23S rRNA. Forms part of two intersubunit bridges in the 70S ribosome. The polypeptide is Large ribosomal subunit protein uL14 (Rhodococcus jostii (strain RHA1)).